The following is a 561-amino-acid chain: Asparagine synthetase [glutamine-hydrolyzing] (561 aa).

Cysteine 2 functions as the For GATase activity in the catalytic mechanism. A Glutamine amidotransferase type-2 domain is found at 2-191 (CGIWALFGSD…PGHYEVLDLK (190 aa)). L-glutamine contacts are provided by residues 49–53 (RLAVV), 75–77 (NGE), and aspartate 97. Residues 213–536 (HAIYDSVEKL…PGRADWLTHY (324 aa)) form the Asparagine synthetase domain. ATP-binding positions include leucine 256, isoleucine 288, and 363 to 364 (SG). Residue lysine 385 is modified to N6-acetyllysine. Threonine 545 is modified (phosphothreonine). The residue at position 557 (serine 557) is a Phosphoserine.

The enzyme catalyses L-aspartate + L-glutamine + ATP + H2O = L-asparagine + L-glutamate + AMP + diphosphate + H(+). It functions in the pathway amino-acid biosynthesis; L-asparagine biosynthesis; L-asparagine from L-aspartate (L-Gln route): step 1/1. This is Asparagine synthetase [glutamine-hydrolyzing] (Asns) from Rattus norvegicus (Rat).